The primary structure comprises 355 residues: Capsid protein VP1/VP2 (355 aa).

Residues 1–21 are compositionally biased toward basic and acidic residues; the sequence is MADSTTMEHDGRGTKRKREAD. Residues 1 to 41 form a disordered region; it reads MADSTTMEHDGRGTKRKREADGGSGQGVGKGNSNAVKEGYG.

This sequence belongs to the parvoviridae capsid protein family.

It localises to the virion. In terms of biological role, capsid protein self-assembles to form an icosahedral capsid with a T=1 symmetry, about 22 nm in diameter, and consisting of 60 copies of size variants of the capsid proteins, which differ in the N-terminushe capsid encapsulates the genomic ssDNA. Capsid proteins are responsible for the attachment to host cell receptors. This attachment induces virion internalization predominantly through clathrin-dependent endocytosis. The protein is Capsid protein VP1/VP2 (VP) of Aedes albopictus densovirus (isolate Boublik/1994) (AalDNV).